A 520-amino-acid chain; its full sequence is Nonsense-mediated mRNA decay factor SMG9 (520 aa).

Positions 1–143 (MSESGHSQPG…KGEKEGQRPT (143 aa)) are disordered. At serine 2 the chain carries N-acetylserine. 5 positions are modified to phosphoserine: serine 2, serine 4, serine 7, serine 32, and serine 53. Basic and acidic residues predominate over residues 36–53 (GRERDYIAPWERERRDGS). Pro residues-rich tracts occupy residues 78 to 94 (QPPP…PAPL) and 122 to 133 (TAPPPPTAPAPP). Position 451 is a phosphoserine (serine 451).

It belongs to the SMG9 family. In terms of assembly, self-associates to form homodimers and forms heterodimers with SMG8; these assembly forms may represent SMG1C intermediate forms. Component of the SMG1C complex composed of SMG1, SMG8 and SMG9. Interacts with DHX34; the interaction is RNA-independent. Phosphorylated by SMG1.

Functionally, involved in nonsense-mediated decay (NMD) of mRNAs containing premature stop codons. Is recruited by release factors to stalled ribosomes together with SMG1 and SMG8 (forming the SMG1C protein kinase complex) and, in the SMG1C complex, is required for the efficient association between SMG1 and SMG8. Plays a role in brain, heart, and eye development. This chain is Nonsense-mediated mRNA decay factor SMG9, found in Mus musculus (Mouse).